We begin with the raw amino-acid sequence, 581 residues long: Chaperonin GroEL 1 (581 aa).

Residues 29 to 32, 86 to 90, Gly-413, and Asp-492 each bind ATP; these read TIGP and DGTTT.

The protein belongs to the chaperonin (HSP60) family. Forms a cylinder of 14 subunits composed of two heptameric rings stacked back-to-back. Interacts with the co-chaperonin GroES.

Its subcellular location is the cytoplasm. The enzyme catalyses ATP + H2O + a folded polypeptide = ADP + phosphate + an unfolded polypeptide.. Functionally, together with its co-chaperonin GroES, plays an essential role in assisting protein folding. The GroEL-GroES system forms a nano-cage that allows encapsulation of the non-native substrate proteins and provides a physical environment optimized to promote and accelerate protein folding. The protein is Chaperonin GroEL 1 of Prochlorococcus marinus subsp. pastoris (strain CCMP1986 / NIES-2087 / MED4).